The primary structure comprises 270 residues: Formamidopyrimidine-DNA glycosylase (270 aa).

The active-site Schiff-base intermediate with DNA is Pro-2. Glu-3 (proton donor) is an active-site residue. Lys-58 acts as the Proton donor; for beta-elimination activity in catalysis. Positions 91, 110, and 151 each coordinate DNA. Residues 236 to 270 (LVYGRDGLPCPNCGRALKHATIGQRASVWCSHCQR) form an FPG-type zinc finger. Arg-260 acts as the Proton donor; for delta-elimination activity in catalysis.

Belongs to the FPG family. Monomer. It depends on Zn(2+) as a cofactor.

It catalyses the reaction Hydrolysis of DNA containing ring-opened 7-methylguanine residues, releasing 2,6-diamino-4-hydroxy-5-(N-methyl)formamidopyrimidine.. It carries out the reaction 2'-deoxyribonucleotide-(2'-deoxyribose 5'-phosphate)-2'-deoxyribonucleotide-DNA = a 3'-end 2'-deoxyribonucleotide-(2,3-dehydro-2,3-deoxyribose 5'-phosphate)-DNA + a 5'-end 5'-phospho-2'-deoxyribonucleoside-DNA + H(+). In terms of biological role, involved in base excision repair of DNA damaged by oxidation or by mutagenic agents. Acts as a DNA glycosylase that recognizes and removes damaged bases. Has a preference for oxidized purines, such as 7,8-dihydro-8-oxoguanine (8-oxoG). Has AP (apurinic/apyrimidinic) lyase activity and introduces nicks in the DNA strand. Cleaves the DNA backbone by beta-delta elimination to generate a single-strand break at the site of the removed base with both 3'- and 5'-phosphates. This is Formamidopyrimidine-DNA glycosylase from Stenotrophomonas maltophilia (strain K279a).